A 37-amino-acid polypeptide reads, in one-letter code: Large ribosomal subunit protein bL36c (37 aa).

The protein belongs to the bacterial ribosomal protein bL36 family.

The protein resides in the plastid. It is found in the chloroplast. The polypeptide is Large ribosomal subunit protein bL36c (Liriodendron tulipifera (Tuliptree)).